Consider the following 604-residue polypeptide: ATPase family AAA domain-containing protein 3A homolog (604 aa).

Positions 1-50 (MSWLLGRNRQQPQPDQTAGFSEGGGAADPEGRTAGEKSGDSQLSRAERKA) are disordered. The segment covering 8–19 (NRQQPQPDQTAG) has biased composition (polar residues). Residues 29 to 50 (PEGRTAGEKSGDSQLSRAERKA) show a composition bias toward basic and acidic residues. Residues 62–221 (ERAADAAKTL…INLEKIRLKA (160 aa)) adopt a coiled-coil conformation. 358–365 (GPPGTGKT) contacts ATP.

In terms of assembly, can form homooligomers.

It is found in the mitochondrion inner membrane. It localises to the mitochondrion matrix. The protein resides in the mitochondrion nucleoid. Functionally, required to maintain the proper number of mitochondria in neurons and muscles. This Drosophila melanogaster (Fruit fly) protein is ATPase family AAA domain-containing protein 3A homolog.